We begin with the raw amino-acid sequence, 462 residues long: MSTAAQCPPPRPGGGGGDTTLAALSAHMAPCRDTTPEQLAQLIDVHLGDLRQEQPNWTISSSTVAGRGVFATRDIAAGELIFQERALVTGPTARKGQLSSCICCHETLPQTGFLCRHRCTLPVCETCSDSEEHQAECEHFRRWQPKDVDAEQEQVNPMSLRILTAVRVFHLGKEQRHLVDAMQANAERAYRREIIQAAQCFRNFPTTDRVFMDQLFRIVGVLNTNAFEAPCRSGGHETLLRGLFPLTAIMNHECTPNASHYFENGRLAVVRAARDIPKGGEITTTYTKILWGNLTRNIFLKMTKHFACDCVRCHDNTENGTYLSALFCREQGCRGLVIPVQTRTLQPDWRCITCENVFPHAKMAKYQDFALNTINNRINSCSVQDMIHFINELCPRFCPSSNYVLIEAKLNVIWRMTRFDHEEYTPEEMGHMDRYREEVLAILHKLGAGECTLKKLITGEIQ.

Residues 55–287 (PNWTISSSTV…KGGEITTTYT (233 aa)) enclose the SET domain.

Belongs to the class V-like SAM-binding methyltransferase superfamily.

This Drosophila melanogaster (Fruit fly) protein is SET domain-containing protein SmydA-8, isoform A.